The chain runs to 165 residues: 6,7-dimethyl-8-ribityllumazine synthase (165 aa).

Residues F24, 62–64 (AFE), and 86–88 (AVI) each bind 5-amino-6-(D-ribitylamino)uracil. 91–92 (DT) lines the (2S)-2-hydroxy-3-oxobutyl phosphate pocket. The active-site Proton donor is the H94. F119 contacts 5-amino-6-(D-ribitylamino)uracil. R133 provides a ligand contact to (2S)-2-hydroxy-3-oxobutyl phosphate.

Belongs to the DMRL synthase family.

The catalysed reaction is (2S)-2-hydroxy-3-oxobutyl phosphate + 5-amino-6-(D-ribitylamino)uracil = 6,7-dimethyl-8-(1-D-ribityl)lumazine + phosphate + 2 H2O + H(+). The protein operates within cofactor biosynthesis; riboflavin biosynthesis; riboflavin from 2-hydroxy-3-oxobutyl phosphate and 5-amino-6-(D-ribitylamino)uracil: step 1/2. Its function is as follows. Catalyzes the formation of 6,7-dimethyl-8-ribityllumazine by condensation of 5-amino-6-(D-ribitylamino)uracil with 3,4-dihydroxy-2-butanone 4-phosphate. This is the penultimate step in the biosynthesis of riboflavin. The sequence is that of 6,7-dimethyl-8-ribityllumazine synthase from Prochlorococcus marinus (strain MIT 9313).